We begin with the raw amino-acid sequence, 58 residues long: T-cell receptor gamma alternate reading frame protein (58 aa).

As to expression, detected at low levels in the ductal cells of the salivary gland but not in the acinar cells (at protein level). Expressed in endometrium (at protein level). Expressed in epithelial cells within the acinar ducts of the prostate.

The sequence is that of T-cell receptor gamma alternate reading frame protein from Homo sapiens (Human).